Here is a 953-residue protein sequence, read N- to C-terminus: Translation initiation factor IF-2 (953 aa).

Disordered regions lie at residues 51–242 (SKAS…QEAK) and 279–363 (TKLK…TERK). 2 stretches are compositionally biased toward basic and acidic residues: residues 80 to 89 (TGSEHVEKTQ) and 98 to 111 (FKAE…EQAA). Residues 131 to 140 (QPNNHQTNEQ) show a composition bias toward polar residues. A compositionally biased stretch (basic and acidic residues) spans 149–188 (SQGDTNDKRIERKASNVSPRHDNHQLVGDRNRSFAKENHK). The segment covering 191-207 (RFTNQKKQGRQEPQSKS) has biased composition (polar residues). Positions 229–242 (RQSETRFRAQQEAK) are enriched in basic and acidic residues. Residues 282–291 (KSSNISAKST) show a composition bias toward polar residues. Residues 300 to 317 (ARPEKNRELTHHSQEGQK) show a composition bias toward basic and acidic residues. Residues 322-338 (SWNSQNQVRNQKNSNWN) show a composition bias toward low complexity. Over residues 339–348 (KNKKTKKGKN) the composition is skewed to basic residues. The tr-type G domain occupies 454–623 (ERAPVVTIMG…LLVAEVEELK (170 aa)). The tract at residues 463-470 (GHVDHGKT) is G1. Position 463–470 (463–470 (GHVDHGKT)) interacts with GTP. Positions 488-492 (GITQH) are G2. Residues 509–512 (DTPG) are G3. Residues 509-513 (DTPGH) and 563-566 (NKID) each bind GTP. Positions 563–566 (NKID) are G4. Positions 599–601 (SAK) are G5.

Belongs to the TRAFAC class translation factor GTPase superfamily. Classic translation factor GTPase family. IF-2 subfamily.

It localises to the cytoplasm. Functionally, one of the essential components for the initiation of protein synthesis. Protects formylmethionyl-tRNA from spontaneous hydrolysis and promotes its binding to the 30S ribosomal subunits. Also involved in the hydrolysis of GTP during the formation of the 70S ribosomal complex. In Streptococcus pyogenes serotype M49 (strain NZ131), this protein is Translation initiation factor IF-2.